The following is a 396-amino-acid chain: Tryptophan synthase beta chain (396 aa).

Lys-86 bears the N6-(pyridoxal phosphate)lysine mark.

It belongs to the TrpB family. In terms of assembly, tetramer of two alpha and two beta chains. Requires pyridoxal 5'-phosphate as cofactor.

The catalysed reaction is (1S,2R)-1-C-(indol-3-yl)glycerol 3-phosphate + L-serine = D-glyceraldehyde 3-phosphate + L-tryptophan + H2O. The protein operates within amino-acid biosynthesis; L-tryptophan biosynthesis; L-tryptophan from chorismate: step 5/5. Functionally, the beta subunit is responsible for the synthesis of L-tryptophan from indole and L-serine. The sequence is that of Tryptophan synthase beta chain from Proteus mirabilis (strain HI4320).